The sequence spans 116 residues: Small ribosomal subunit protein uS13 (116 aa).

The disordered stretch occupies residues 88-116 (GSRHKKGLPVRGQHTKNNARTRKGPRKQA).

The protein belongs to the universal ribosomal protein uS13 family. Part of the 30S ribosomal subunit. Forms a loose heterodimer with protein S19. Forms two bridges to the 50S subunit in the 70S ribosome.

Functionally, located at the top of the head of the 30S subunit, it contacts several helices of the 16S rRNA. In the 70S ribosome it contacts the 23S rRNA (bridge B1a) and protein L5 of the 50S subunit (bridge B1b), connecting the 2 subunits; these bridges are implicated in subunit movement. Contacts the tRNAs in the A and P-sites. In Finegoldia magna (strain ATCC 29328 / DSM 20472 / WAL 2508) (Peptostreptococcus magnus), this protein is Small ribosomal subunit protein uS13.